The following is a 365-amino-acid chain: Probable dual-specificity RNA methyltransferase RlmN (365 aa).

Glu-111 (proton acceptor) is an active-site residue. Residues 117 to 351 (ADDRMTACIS…VNIRRSRGKD (235 aa)) enclose the Radical SAM core domain. Cys-124 and Cys-356 form a disulfide bridge. Residues Cys-131, Cys-135, and Cys-138 each coordinate [4Fe-4S] cluster. S-adenosyl-L-methionine-binding positions include 182–183 (GE), Ser-214, 237–239 (SLH), and Asn-313. Cys-356 serves as the catalytic S-methylcysteine intermediate.

This sequence belongs to the radical SAM superfamily. RlmN family. [4Fe-4S] cluster is required as a cofactor.

It localises to the cytoplasm. It catalyses the reaction adenosine(2503) in 23S rRNA + 2 reduced [2Fe-2S]-[ferredoxin] + 2 S-adenosyl-L-methionine = 2-methyladenosine(2503) in 23S rRNA + 5'-deoxyadenosine + L-methionine + 2 oxidized [2Fe-2S]-[ferredoxin] + S-adenosyl-L-homocysteine. It carries out the reaction adenosine(37) in tRNA + 2 reduced [2Fe-2S]-[ferredoxin] + 2 S-adenosyl-L-methionine = 2-methyladenosine(37) in tRNA + 5'-deoxyadenosine + L-methionine + 2 oxidized [2Fe-2S]-[ferredoxin] + S-adenosyl-L-homocysteine. Specifically methylates position 2 of adenine 2503 in 23S rRNA and position 2 of adenine 37 in tRNAs. This is Probable dual-specificity RNA methyltransferase RlmN from Cytophaga hutchinsonii (strain ATCC 33406 / DSM 1761 / CIP 103989 / NBRC 15051 / NCIMB 9469 / D465).